The sequence spans 2514 residues: Nuclear receptor corepressor 2 (2514 aa).

Residues 1–13 (MSGSTQPVAQTWR) show a composition bias toward polar residues. A disordered region spans residues 1–24 (MSGSTQPVAQTWRATEPRYPPHSL). Position 18 is an asymmetric dimethylarginine (R18). 4 positions are modified to phosphoserine: S54, S67, S149, and S152. Disordered regions lie at residues 120 to 162 (PSPL…ELEL) and 190 to 220 (ISKL…PPIE). T156 is modified (phosphothreonine). The stretch at 174 to 215 (QNMDRVDREITMVEQQISKLKKKQQQLEEEAAKPPEPEKPVS) forms a coiled coil. A compositionally biased stretch (basic and acidic residues) spans 203 to 212 (EAAKPPEPEK). At S215 the chain carries Phosphoserine. The interval 254-312 (LPLYNQPSDTRQYHENIKINQAMRKKLILYFKRRNHARKQWEQKFCQRYDQLMEAWEKK) is interaction with SIN3A/B. Residues 389–480 (MRQLAVIPPM…YLTKKNENYK (92 aa)) are deacetylase activation domain (DAD). The SANT 1 domain occupies 427 to 478 (QVMNMWSEQEKETFREKFMQHPKNFGLIASFLERKTVAECVLYYYLTKKNEN). Residues K449, Y470, and Y471 each contribute to the 1D-myo-inositol 1,4,5,6-tetrakisphosphate site. 3 disordered regions span residues 487 to 622 (YRRR…EMET), 674 to 1081 (EKER…APPG), and 1165 to 1186 (SGVK…SLGV). At S493 the chain carries Phosphoserine. The segment covering 494–510 (QQQQQQQQQQQQQQQQQ) has biased composition (low complexity). Residues 516–552 (SQEEKDEKEKEKEAEKEEEKPEVENDKEDLLKEKTDD) are compositionally biased toward basic and acidic residues. Positions 522-561 (EKEKEKEAEKEEEKPEVENDKEDLLKEKTDDTSGEDNDEK) form a coiled coil. T553 bears the Phosphothreonine mark. S554 is subject to Phosphoserine. Composition is skewed to polar residues over residues 597–613 (TPQQ…NESS) and 740–753 (ATVN…SIPS). The SANT 2 domain occupies 610–661 (NESSRWTEEEMETAKKGLLEHGRNWSAIARMVGSKTVSQCKNFYFNYKKRQN). Residues S750 and S753 each carry the phosphoserine modification. 2 stretches are compositionally biased toward pro residues: residues 777–796 (GPPP…PTEP) and 806–822 (PTPP…PPVV). Positions 856 to 866 (GKAEEPVKSEC) are enriched in basic and acidic residues. K878 bears the N6-acetyllysine mark. A compositionally biased stretch (polar residues) spans 902–921 (RATTAKSSGAPQDSDSSATC). Residues 937–948 (LLSPRPSLLTPT) show a composition bias toward low complexity. S939 bears the Phosphoserine mark. Phosphothreonine is present on T946. Residue S956 is modified to Phosphoserine. Position 959 is an N6-acetyllysine (K959). A compositionally biased stretch (basic and acidic residues) spans 980-990 (KVHEPPREDAA). Pro residues predominate over residues 993-1004 (KPAPPAPPPPQN). Positions 1005 to 1014 (LQPESDAPQQ) are enriched in polar residues. Residue K1168 forms a Glycyl lysine isopeptide (Lys-Gly) (interchain with G-Cter in SUMO2) linkage. At S1173 the chain carries Phosphoserine. N6-acetyllysine is present on residues K1210 and K1240. Phosphoserine is present on S1251. The interval 1287–1307 (TQCSKEDGRSSSGPPHETAAP) is disordered. S1323 carries the phosphoserine modification. The residue at position 1383 (T1383) is a Phosphothreonine. Disordered stretches follow at residues 1440–1482 (PLAP…SPGR) and 1506–1609 (ESLK…HPIS). At S1479 the chain carries Phosphoserine. A compositionally biased stretch (low complexity) spans 1513–1526 (GTASSSGGSIARGA). Phosphoserine is present on residues S1539, S1595, and S1619. R1653 carries the asymmetric dimethylarginine modification. Disordered regions lie at residues 1763-1867 (TAPQ…TQDA) and 1937-2124 (KEAP…PGVK). A compositionally biased stretch (low complexity) spans 1766–1782 (QPFSSRHSSSPLSPGGP). Phosphoserine occurs at positions 1775 and 1778. Over residues 1794 to 1813 (SERERDRDRERDRDREREKS) the composition is skewed to basic and acidic residues. At S1861 the chain carries Phosphoserine. The segment covering 1938–1952 (EAPRVARPERPRADT) has biased composition (basic and acidic residues). K1959 carries the N6-acetyllysine modification. Residue S2005 is modified to Phosphoserine. K2026 bears the N6-acetyllysine mark. Positions 2043–2060 (SSYSPEGVEPVSPVSSPS) are enriched in low complexity. S2046, S2054, S2057, S2058, and S2060 each carry phosphoserine. T2062 is subject to Phosphothreonine. The span at 2062–2085 (THDKGLPKHLEELDKSHLEGELRP) shows a compositional bias: basic and acidic residues. The residue at position 2077 (S2077) is a Phosphoserine. Positions 2106–2117 (LPESQPSSSPLL) are enriched in low complexity. The tract at residues 2128–2131 (RVVT) is required for interaction with RARA in the absence of its ligand. The CORNR box of ID1 motif lies at 2136 to 2140 (ISEVI). Disordered stretches follow at residues 2174 to 2235 (RRPP…GHSR) and 2248 to 2269 (QTEP…PAFF). Phosphoserine occurs at positions 2203, 2223, and 2258. Residues 2339 to 2343 (LEAII) carry the CORNR box of ID2 motif. A disordered region spans residues 2384–2500 (DGRSDHTLTS…PHHAWDEEPK (117 aa)). Position 2413 is a phosphoserine (S2413). Over residues 2482–2492 (PAGSGPLAGPH) the composition is skewed to low complexity.

The protein belongs to the N-CoR nuclear receptor corepressors family. As to quaternary structure, forms a large corepressor complex that contains SIN3A/B and histone deacetylases HDAC1 and HDAC2. This complex associates with the thyroid (TR) and the retinoid acid receptors (RAR) in the absence of ligand, and may stabilize their interaction with TFIIB. Interacts directly with RARA in the absence of ligand; the interaction represses RARA activity. Interacts (isoform SMRT) with HDAC10. Interacts with MINT. Component of the N-Cor repressor complex, at least composed of NCOR1, NCOR2, HDAC3, TBL1X, TBL1R, CORO2A and GPS2. Interacts with CBFA2T3 and ATXN1L. Interacts with RARB; the interaction is weak and does not repress RARB transactivational activity. Interacts (via 1D-myo-inositol 1,4,5,6-tetrakisphosphate) with HDAC3; promoting the histone deacetylase activity of HDAC3. Interacts with HDAC7 and C1D. Interacts with NR4A2; this interaction increases in the absence of PITX3. Interacts with BCL6 (via the BTB domain), required for BCL6 transcriptional repressor activity on a subset of target genes. Forms ternary complexes with BCOR and BCL6 on target gene promoters but, on enhancer elements, interacts with BCL6 and HDAC3 to repress proximal gene expression. May interact with DEAF1. Interacts with RXRA. Interacts with MECP2. Interacts with ZBTB7A. Interacts with AR. Interacts with TBL1Y. Interacts with SANBR (via the BTB domain). Ubiquitous. High levels of expression are detected in lung, spleen and brain.

Its subcellular location is the nucleus. Its function is as follows. Transcriptional corepressor that mediates the transcriptional repression activity of some nuclear receptors by promoting chromatin condensation, thus preventing access of the basal transcription. Acts by recruiting chromatin modifiers, such as histone deacetylases HDAC1, HDAC2 and HDAC3. Required to activate the histone deacetylase activity of HDAC3. Involved in the regulation BCL6-dependent of the germinal center (GC) reactions, mainly through the control of the GC B-cells proliferation and survival. Recruited by ZBTB7A to the androgen response elements/ARE on target genes, negatively regulates androgen receptor signaling and androgen-induced cell proliferation. Functionally, isoform 1 and isoform 4 have different affinities for different nuclear receptors. The chain is Nuclear receptor corepressor 2 from Homo sapiens (Human).